The sequence spans 73 residues: Translation initiation factor IF-1 (73 aa).

The S1-like domain maps to 1-73 (MAKKDGAIEV…TRGRIVYRYK (73 aa)).

Belongs to the IF-1 family. Component of the 30S ribosomal translation pre-initiation complex which assembles on the 30S ribosome in the order IF-2 and IF-3, IF-1 and N-formylmethionyl-tRNA(fMet); mRNA recruitment can occur at any time during PIC assembly.

It localises to the cytoplasm. In terms of biological role, one of the essential components for the initiation of protein synthesis. Stabilizes the binding of IF-2 and IF-3 on the 30S subunit to which N-formylmethionyl-tRNA(fMet) subsequently binds. Helps modulate mRNA selection, yielding the 30S pre-initiation complex (PIC). Upon addition of the 50S ribosomal subunit IF-1, IF-2 and IF-3 are released leaving the mature 70S translation initiation complex. The protein is Translation initiation factor IF-1 of Mycolicibacterium gilvum (strain PYR-GCK) (Mycobacterium gilvum (strain PYR-GCK)).